A 481-amino-acid chain; its full sequence is Xylulose kinase (481 aa).

Position 81 to 82 (81 to 82) interacts with substrate; sequence QH. D239 acts as the Proton acceptor in catalysis.

The protein belongs to the FGGY kinase family.

It catalyses the reaction D-xylulose + ATP = D-xylulose 5-phosphate + ADP + H(+). Catalyzes the phosphorylation of D-xylulose to D-xylulose 5-phosphate. The sequence is that of Xylulose kinase from Streptomyces coelicolor (strain ATCC BAA-471 / A3(2) / M145).